Reading from the N-terminus, the 347-residue chain is GMP reductase (347 aa).

Residue 108-131 (ADFEKTVQILALNPALNFVCIDVA) participates in NADP(+) binding. The K(+) site is built by Gly-181 and Gly-183. Catalysis depends on Cys-186, which acts as the Thioimidate intermediate. 216-239 (IVSDGGCTMPGDVAKAFGGGADFV) lines the NADP(+) pocket.

Belongs to the IMPDH/GMPR family. GuaC type 1 subfamily. As to quaternary structure, homotetramer.

The enzyme catalyses IMP + NH4(+) + NADP(+) = GMP + NADPH + 2 H(+). Functionally, catalyzes the irreversible NADPH-dependent deamination of GMP to IMP. It functions in the conversion of nucleobase, nucleoside and nucleotide derivatives of G to A nucleotides, and in maintaining the intracellular balance of A and G nucleotides. The polypeptide is GMP reductase (Salmonella choleraesuis (strain SC-B67)).